The chain runs to 410 residues: Mitochondrial potassium channel (410 aa).

A mitochondrion-targeting transit peptide spans 1-35 (MTGCSPVFTMQQVVGVSHRLVWRTFRGTDLLMTRT). The Mitochondrial matrix segment spans residues 36-201 (LCSPGPSRPG…KERTRAERTK (166 aa)). Residues 116-143 (VREAREDLEAQQTKLKEVRDRLDRVSRE) adopt a coiled-coil conformation. Residues 202–222 (NWSLIGSVLGALIGVAGSTYV) form a helical membrane-spanning segment. The Mitochondrial intermembrane segment spans residues 223–385 (NRVRLQELKA…RLEAQANRNA (163 aa)). The disordered stretch occupies residues 276-296 (GQDQGSGSPTGPSSPRGKDID). A compositionally biased stretch (low complexity) spans 280-290 (GSGSPTGPSSP). The helical transmembrane segment at 386 to 406 (ISSTLVTCVTFMATLPLLYML) threads the bilayer. Residues 407-410 (FKTS) lie on the Mitochondrial matrix side of the membrane.

The mitochondrial potassium channel (mitoK(ATP)) forms a heteromultimer.

Its subcellular location is the mitochondrion inner membrane. The catalysed reaction is K(+)(in) = K(+)(out). Its activity is regulated as follows. Channel activity inhibited by ATP via ABCB8/MITOSUR subunit. Functionally, pore-forming subunit of the mitochondrial ATP-gated potassium channel (mitoK(ATP)). Together with ATP-binding subunit ABCB8/MITOSUR of the mitoK(ATP) channel, mediates ATP-dependent K(+) currents across the mitochondrial inner membrane. An increase in ATP intracellular levels closes the channel, inhibiting K(+) transport, whereas a decrease in ATP levels enhances K(+) uptake in the mitochondrial matrix. May contribute to the homeostatic control of cellular metabolism under stress conditions by regulating the mitochondrial matrix volume. The sequence is that of Mitochondrial potassium channel from Rattus norvegicus (Rat).